The following is a 322-amino-acid chain: Lipoyl synthase (322 aa).

The span at 1–12 (MVTVLNTVNQSG) shows a compositional bias: polar residues. The tract at residues 1–22 (MVTVLNTVNQSGRLRHPEKAHR) is disordered. [4Fe-4S] cluster contacts are provided by Cys60, Cys65, Cys71, Cys86, Cys90, Cys93, and Ser299. A Radical SAM core domain is found at 72–288 (WEKKHATFMI…ETIGKTKGFL (217 aa)).

This sequence belongs to the radical SAM superfamily. Lipoyl synthase family. The cofactor is [4Fe-4S] cluster.

It localises to the cytoplasm. The enzyme catalyses [[Fe-S] cluster scaffold protein carrying a second [4Fe-4S](2+) cluster] + N(6)-octanoyl-L-lysyl-[protein] + 2 oxidized [2Fe-2S]-[ferredoxin] + 2 S-adenosyl-L-methionine + 4 H(+) = [[Fe-S] cluster scaffold protein] + N(6)-[(R)-dihydrolipoyl]-L-lysyl-[protein] + 4 Fe(3+) + 2 hydrogen sulfide + 2 5'-deoxyadenosine + 2 L-methionine + 2 reduced [2Fe-2S]-[ferredoxin]. Its pathway is protein modification; protein lipoylation via endogenous pathway; protein N(6)-(lipoyl)lysine from octanoyl-[acyl-carrier-protein]: step 2/2. Catalyzes the radical-mediated insertion of two sulfur atoms into the C-6 and C-8 positions of the octanoyl moiety bound to the lipoyl domains of lipoate-dependent enzymes, thereby converting the octanoylated domains into lipoylated derivatives. The protein is Lipoyl synthase of Brucella abortus (strain S19).